Consider the following 616-residue polypeptide: Hemagglutinin-neuraminidase (616 aa).

The Intravirion segment spans residues 1 to 26 (MDRAVSQVALENDEREAKNTWRLVFR). The helical transmembrane segment at 27–47 (IAILLLTVVTLAISAAALAYS) threads the bilayer. Residues 48 to 616 (MEASTPSDLI…ELESYAASWP (569 aa)) lie on the Virion surface side of the membrane. Asn-119 is a glycosylation site (N-linked (GlcNAc...) asparagine; by host). Residues 124-152 (GAPIHDPDYIGGIGKELIVDDASDVTSFY) form an important for interaction with fusion/F protein region. 3 disulfide bridges follow: Cys-172/Cys-196, Cys-186/Cys-247, and Cys-238/Cys-251. The tract at residues 234-239 (NRKSCS) is involved in neuraminidase activity. Asn-341 and Asn-433 each carry an N-linked (GlcNAc...) asparagine; by host glycan. Cystine bridges form between Cys-344–Cys-461 and Cys-455–Cys-465. 3 N-linked (GlcNAc...) asparagine; by host glycosylation sites follow: Asn-481, Asn-538, and Asn-600. The cysteines at positions 531 and 542 are disulfide-linked.

Belongs to the paramyxoviruses hemagglutinin-neuraminidase family. Homotetramer; composed of disulfide-linked homodimers. Interacts with F protein trimer. Interacts with host CG-1B; this interaction inhibits viral adsorption and replication rather than internalization.

The protein localises to the virion membrane. It is found in the host cell membrane. The catalysed reaction is Hydrolysis of alpha-(2-&gt;3)-, alpha-(2-&gt;6)-, alpha-(2-&gt;8)- glycosidic linkages of terminal sialic acid residues in oligosaccharides, glycoproteins, glycolipids, colominic acid and synthetic substrates.. In terms of biological role, mediates the viral entry into the host cell together with fusion/F protein. Attaches the virus to sialic acid-containing cell receptors and thereby initiates infection. Binding of HN protein to the receptor induces a conformational change that allows the F protein to trigger virion/cell membranes fusion. Its function is as follows. Neuraminidase activity ensures the efficient spread of the virus by dissociating the mature virions from the neuraminic acid containing glycoproteins. The polypeptide is Hemagglutinin-neuraminidase (HN) (Newcastle disease virus (strain Chicken/Northern Ireland/Ulster/67) (NDV)).